Reading from the N-terminus, the 641-residue chain is Bilirubin reductase (641 aa).

Gln96 provides a ligand contact to FMN. The active-site Proton donor is Arg167. FMN is bound by residues Lys214, Arg295, and 317–318 (GR). Positions 341, 344, 348, and 360 each coordinate [4Fe-4S] cluster. Residues Ala391, Glu410, Gln418, Lys428, and Ala455 each coordinate FAD.

This sequence in the N-terminal section; belongs to the NADH:flavin oxidoreductase/NADH oxidase family. The cofactor is FAD. Requires FMN as cofactor. It depends on [4Fe-4S] cluster as a cofactor.

It carries out the reaction urobilinogen + 4 A = (4Z,15Z)-bilirubin IXalpha + 4 AH2. The catalysed reaction is urobilinogen + 2 A = (4Z,15Z)-mesobilirubin IXalpha + 2 AH2. The protein operates within porphyrin-containing compound metabolism; protoheme degradation. Its function is as follows. Bilirubin reductase that catalyzes reduction of mesobilirubin and/or bilirubin to urobilinogen, a key step during heme degradation. Urobilinogen then spontaneously degrades into urobilin, which gives urine its distinctive yellow color. In Mediterraneibacter gnavus (strain CC55_001C), this protein is Bilirubin reductase.